The primary structure comprises 515 residues: NADH-ubiquinone oxidoreductase chain 2 (515 aa).

Transmembrane regions (helical) follow at residues 63 to 83, 250 to 270, 299 to 319, 356 to 376, and 379 to 399; these read WPIG…NSGS, VFIY…CSIA, FVLV…GLFI, AITF…AGFC, and FYLF…VGVV.

This sequence belongs to the complex I subunit 2 family.

The protein localises to the mitochondrion inner membrane. It catalyses the reaction a ubiquinone + NADH + 5 H(+)(in) = a ubiquinol + NAD(+) + 4 H(+)(out). Core subunit of the mitochondrial membrane respiratory chain NADH dehydrogenase (Complex I) that is believed to belong to the minimal assembly required for catalysis. Complex I functions in the transfer of electrons from NADH to the respiratory chain. The immediate electron acceptor for the enzyme is believed to be ubiquinone. The sequence is that of NADH-ubiquinone oxidoreductase chain 2 (ND2) from Beta vulgaris (Sugar beet).